Consider the following 273-residue polypeptide: Putative pyruvate, phosphate dikinase regulatory protein (273 aa).

An ADP-binding site is contributed by Gly151–Thr158.

Belongs to the pyruvate, phosphate/water dikinase regulatory protein family. PDRP subfamily.

The catalysed reaction is N(tele)-phospho-L-histidyl/L-threonyl-[pyruvate, phosphate dikinase] + ADP = N(tele)-phospho-L-histidyl/O-phospho-L-threonyl-[pyruvate, phosphate dikinase] + AMP + H(+). The enzyme catalyses N(tele)-phospho-L-histidyl/O-phospho-L-threonyl-[pyruvate, phosphate dikinase] + phosphate + H(+) = N(tele)-phospho-L-histidyl/L-threonyl-[pyruvate, phosphate dikinase] + diphosphate. Functionally, bifunctional serine/threonine kinase and phosphorylase involved in the regulation of the pyruvate, phosphate dikinase (PPDK) by catalyzing its phosphorylation/dephosphorylation. This chain is Putative pyruvate, phosphate dikinase regulatory protein, found in Desulfitobacterium hafniense (strain DSM 10664 / DCB-2).